A 371-amino-acid polypeptide reads, in one-letter code: UDP-N-acetylglucosamine--N-acetylmuramyl-(pentapeptide) pyrophosphoryl-undecaprenol N-acetylglucosamine transferase (371 aa).

Residues 10-12, Asn122, Arg166, Ser196, and Gln301 contribute to the UDP-N-acetyl-alpha-D-glucosamine site; that span reads TGG.

Belongs to the glycosyltransferase 28 family. MurG subfamily.

It localises to the cell inner membrane. The enzyme catalyses di-trans,octa-cis-undecaprenyl diphospho-N-acetyl-alpha-D-muramoyl-L-alanyl-D-glutamyl-meso-2,6-diaminopimeloyl-D-alanyl-D-alanine + UDP-N-acetyl-alpha-D-glucosamine = di-trans,octa-cis-undecaprenyl diphospho-[N-acetyl-alpha-D-glucosaminyl-(1-&gt;4)]-N-acetyl-alpha-D-muramoyl-L-alanyl-D-glutamyl-meso-2,6-diaminopimeloyl-D-alanyl-D-alanine + UDP + H(+). It functions in the pathway cell wall biogenesis; peptidoglycan biosynthesis. Cell wall formation. Catalyzes the transfer of a GlcNAc subunit on undecaprenyl-pyrophosphoryl-MurNAc-pentapeptide (lipid intermediate I) to form undecaprenyl-pyrophosphoryl-MurNAc-(pentapeptide)GlcNAc (lipid intermediate II). The sequence is that of UDP-N-acetylglucosamine--N-acetylmuramyl-(pentapeptide) pyrophosphoryl-undecaprenol N-acetylglucosamine transferase from Halothermothrix orenii (strain H 168 / OCM 544 / DSM 9562).